The primary structure comprises 989 residues: Phosphoenolpyruvate carboxylase (989 aa).

Residues His-175 and Lys-630 contribute to the active site.

This sequence belongs to the PEPCase type 1 family. The cofactor is Mg(2+).

It catalyses the reaction oxaloacetate + phosphate = phosphoenolpyruvate + hydrogencarbonate. Functionally, forms oxaloacetate, a four-carbon dicarboxylic acid source for the tricarboxylic acid cycle. The chain is Phosphoenolpyruvate carboxylase from Prochlorococcus marinus (strain MIT 9301).